The sequence spans 894 residues: Myb-like protein K (894 aa).

Low complexity predominate over residues 93–139 (LQQQQQSPVTNVATNTPPTLQHSISSPSPNNFNNNNNANNQFLSPNS). 4 disordered regions span residues 93–221 (LQQQ…SASS), 299–353 (QVGN…QPIT), 492–539 (QQQQ…LEMI), and 601–659 (AATT…HWTS). Positions 140-149 (PQVAKSSPSQ) are enriched in polar residues. The segment covering 150-221 (NNPSTPIANT…SQSLNSSASS (72 aa)) has biased composition (low complexity). Residues 300 to 309 (VGNPMQQSND) show a composition bias toward polar residues. 2 stretches are compositionally biased toward low complexity: residues 310 to 353 (MQPQ…QPIT) and 492 to 527 (QQQQ…PQQM). Basic and acidic residues-rich tracts occupy residues 611–640 (GKEE…SKKD) and 649–659 (ASKEKTSHWTS). The HTH myb-type domain maps to 649 to 704 (ASKEKTSHWTSEEHNKFLEAVQQFGIKDYHAIAKFVQTRNHHQVRTHVNTYLKNQK). The segment at residues 677–700 (YHAIAKFVQTRNHHQVRTHVNTYL) is a DNA-binding region (H-T-H motif). The interval 703-852 (QKKAEAATSS…EYNSGFDSNS (150 aa)) is disordered. Composition is skewed to low complexity over residues 710 to 742 (TSST…QPPI), 751 to 805 (QQQQ…QQPQ), and 815 to 845 (PPNN…NEYN).

The protein resides in the nucleus. In Dictyostelium discoideum (Social amoeba), this protein is Myb-like protein K (mybK).